Consider the following 545-residue polypeptide: Glucose-6-phosphate isomerase (545 aa).

E351 acts as the Proton donor in catalysis. Active-site residues include H382 and K510.

The protein belongs to the GPI family.

It is found in the cytoplasm. It catalyses the reaction alpha-D-glucose 6-phosphate = beta-D-fructose 6-phosphate. The protein operates within carbohydrate biosynthesis; gluconeogenesis. Its pathway is carbohydrate degradation; glycolysis; D-glyceraldehyde 3-phosphate and glycerone phosphate from D-glucose: step 2/4. Its function is as follows. Catalyzes the reversible isomerization of glucose-6-phosphate to fructose-6-phosphate. The sequence is that of Glucose-6-phosphate isomerase from Shewanella baltica (strain OS185).